The following is a 491-amino-acid chain: UDP-N-acetylmuramate--L-alanine ligase (491 aa).

ATP is bound at residue 126–132 (GTHGKTT).

The protein belongs to the MurCDEF family.

The protein localises to the cytoplasm. The catalysed reaction is UDP-N-acetyl-alpha-D-muramate + L-alanine + ATP = UDP-N-acetyl-alpha-D-muramoyl-L-alanine + ADP + phosphate + H(+). It participates in cell wall biogenesis; peptidoglycan biosynthesis. Its function is as follows. Cell wall formation. This Shigella flexneri protein is UDP-N-acetylmuramate--L-alanine ligase.